We begin with the raw amino-acid sequence, 267 residues long: Tryptophan synthase alpha chain (267 aa).

Catalysis depends on proton acceptor residues E44 and D55.

Belongs to the TrpA family. Tetramer of two alpha and two beta chains.

The catalysed reaction is (1S,2R)-1-C-(indol-3-yl)glycerol 3-phosphate + L-serine = D-glyceraldehyde 3-phosphate + L-tryptophan + H2O. It functions in the pathway amino-acid biosynthesis; L-tryptophan biosynthesis; L-tryptophan from chorismate: step 5/5. Its function is as follows. The alpha subunit is responsible for the aldol cleavage of indoleglycerol phosphate to indole and glyceraldehyde 3-phosphate. This is Tryptophan synthase alpha chain from Coxiella burnetii (strain Dugway 5J108-111).